Here is a 557-residue protein sequence, read N- to C-terminus: Dihydroxy-acid dehydratase (557 aa).

Position 78 (D78) interacts with Mg(2+). C119 is a binding site for [2Fe-2S] cluster. Mg(2+) contacts are provided by D120 and K121. The residue at position 121 (K121) is an N6-carboxylysine. C192 lines the [2Fe-2S] cluster pocket. E442 provides a ligand contact to Mg(2+). The active-site Proton acceptor is the S468.

This sequence belongs to the IlvD/Edd family. In terms of assembly, homodimer. Requires [2Fe-2S] cluster as cofactor. Mg(2+) serves as cofactor.

The enzyme catalyses (2R)-2,3-dihydroxy-3-methylbutanoate = 3-methyl-2-oxobutanoate + H2O. It carries out the reaction (2R,3R)-2,3-dihydroxy-3-methylpentanoate = (S)-3-methyl-2-oxopentanoate + H2O. Its pathway is amino-acid biosynthesis; L-isoleucine biosynthesis; L-isoleucine from 2-oxobutanoate: step 3/4. The protein operates within amino-acid biosynthesis; L-valine biosynthesis; L-valine from pyruvate: step 3/4. Functionally, functions in the biosynthesis of branched-chain amino acids. Catalyzes the dehydration of (2R,3R)-2,3-dihydroxy-3-methylpentanoate (2,3-dihydroxy-3-methylvalerate) into 2-oxo-3-methylpentanoate (2-oxo-3-methylvalerate) and of (2R)-2,3-dihydroxy-3-methylbutanoate (2,3-dihydroxyisovalerate) into 2-oxo-3-methylbutanoate (2-oxoisovalerate), the penultimate precursor to L-isoleucine and L-valine, respectively. The sequence is that of Dihydroxy-acid dehydratase from Bacillus thuringiensis subsp. konkukian (strain 97-27).